Consider the following 207-residue polypeptide: FMN-dependent NADH:quinone oxidoreductase 3 (207 aa).

FMN contacts are provided by residues Ser-10 and 16 to 18 (SIS).

This sequence belongs to the azoreductase type 1 family. Homodimer. It depends on FMN as a cofactor.

The catalysed reaction is 2 a quinone + NADH + H(+) = 2 a 1,4-benzosemiquinone + NAD(+). It carries out the reaction N,N-dimethyl-1,4-phenylenediamine + anthranilate + 2 NAD(+) = 2-(4-dimethylaminophenyl)diazenylbenzoate + 2 NADH + 2 H(+). Functionally, quinone reductase that provides resistance to thiol-specific stress caused by electrophilic quinones. In terms of biological role, also exhibits azoreductase activity. Catalyzes the reductive cleavage of the azo bond in aromatic azo compounds to the corresponding amines. This Burkholderia lata (strain ATCC 17760 / DSM 23089 / LMG 22485 / NCIMB 9086 / R18194 / 383) protein is FMN-dependent NADH:quinone oxidoreductase 3.